The chain runs to 392 residues: Phosphoglycerate kinase (392 aa).

Substrate-binding positions include 21–23, R36, 59–62, R113, and R146; these read DFN and HLGR. Residues K197, E319, and 345–348 contribute to the ATP site; that span reads GGDT.

The protein belongs to the phosphoglycerate kinase family. In terms of assembly, monomer.

The protein localises to the cytoplasm. The enzyme catalyses (2R)-3-phosphoglycerate + ATP = (2R)-3-phospho-glyceroyl phosphate + ADP. It participates in carbohydrate degradation; glycolysis; pyruvate from D-glyceraldehyde 3-phosphate: step 2/5. In Francisella tularensis subsp. holarctica (strain FTNF002-00 / FTA), this protein is Phosphoglycerate kinase.